The primary structure comprises 182 residues: Adenine phosphoribosyltransferase (182 aa).

This sequence belongs to the purine/pyrimidine phosphoribosyltransferase family. In terms of assembly, homodimer.

The protein localises to the cytoplasm. It catalyses the reaction AMP + diphosphate = 5-phospho-alpha-D-ribose 1-diphosphate + adenine. The protein operates within purine metabolism; AMP biosynthesis via salvage pathway; AMP from adenine: step 1/1. Catalyzes a salvage reaction resulting in the formation of AMP, that is energically less costly than de novo synthesis. This chain is Adenine phosphoribosyltransferase, found in Koribacter versatilis (strain Ellin345).